A 156-amino-acid polypeptide reads, in one-letter code: ATP synthase subunit b 2 (156 aa).

The chain crosses the membrane as a helical span at residues 7–29 (LLGQAISFAIFVWFCMKYVWPPV).

Belongs to the ATPase B chain family. F-type ATPases have 2 components, F(1) - the catalytic core - and F(0) - the membrane proton channel. F(1) has five subunits: alpha(3), beta(3), gamma(1), delta(1), epsilon(1). F(0) has three main subunits: a(1), b(2) and c(10-14). The alpha and beta chains form an alternating ring which encloses part of the gamma chain. F(1) is attached to F(0) by a central stalk formed by the gamma and epsilon chains, while a peripheral stalk is formed by the delta and b chains.

The protein resides in the cell inner membrane. In terms of biological role, f(1)F(0) ATP synthase produces ATP from ADP in the presence of a proton or sodium gradient. F-type ATPases consist of two structural domains, F(1) containing the extramembraneous catalytic core and F(0) containing the membrane proton channel, linked together by a central stalk and a peripheral stalk. During catalysis, ATP synthesis in the catalytic domain of F(1) is coupled via a rotary mechanism of the central stalk subunits to proton translocation. Its function is as follows. Component of the F(0) channel, it forms part of the peripheral stalk, linking F(1) to F(0). The sequence is that of ATP synthase subunit b 2 from Marinomonas sp. (strain MWYL1).